Here is a 1596-residue protein sequence, read N- to C-terminus: A-kinase anchor protein SPHKAP (1596 aa).

Disordered stretches follow at residues 214 to 233 (KHGR…RSVS), 242 to 319 (ASEQ…TPKQ), 389 to 432 (DNSE…GHPA), 462 to 481 (SGEE…DQGE), and 760 to 809 (EQSD…SSSS). Over residues 292 to 306 (TLCTSSNSQKLSRTY) the composition is skewed to polar residues. The span at 462-479 (SGEEYECEDEEEESETDQ) shows a compositional bias: acidic residues. The segment at 829-846 (FAEDLATTVVSMATELAA) is PKA-RII subunit binding domain. 3 disordered regions span residues 958 to 1022 (VVDT…ISKQ), 1282 to 1310 (VGER…ENSC), and 1328 to 1443 (VPLI…SSLG). The span at 959–971 (VDTSKSGQSSRSR) shows a compositional bias: polar residues. Positions 1333–1356 (IEPDQREEASEEKGGVETHHREAS) are enriched in basic and acidic residues. Polar residues predominate over residues 1357 to 1372 (HQTQQQSGKGSETATK). Composition is skewed to low complexity over residues 1398–1409 (LSASSEESGSGS) and 1430–1443 (LSEG…SSLG).

Belongs to the AKAP110 family.

It is found in the cytoplasm. In terms of biological role, anchoring protein that mediates the subcellular compartmentation of cAMP-dependent protein kinase (PKA type II). The polypeptide is A-kinase anchor protein SPHKAP (sphkap) (Danio rerio (Zebrafish)).